The following is a 1337-amino-acid chain: Aldehyde oxidase 4 (1337 aa).

The 2Fe-2S ferredoxin-type domain maps to 4–91; sequence DDLVFAVNGE…GCSITTSDGL (88 aa). Residues cysteine 43, cysteine 48, cysteine 51, cysteine 73, cysteine 113, cysteine 116, cysteine 155, and cysteine 157 each contribute to the [2Fe-2S] cluster site. In terms of domain architecture, FAD-binding PCMH-type spans 225–409; sequence LDQTRYHWST…LKVHIPRWIA (185 aa). FAD-binding positions include 259–266, 342–346, aspartate 358, and leucine 399; these read LVVGNTGT and SIGGN. Mo-molybdopterin is bound by residues glutamine 771, phenylalanine 802, and arginine 915. Catalysis depends on glutamate 1265, which acts as the Proton acceptor.

The protein belongs to the xanthine dehydrogenase family. Aldehyde oxidases (AO) are homodimers and heterodimers of AO subunits. Requires [2Fe-2S] cluster as cofactor. FAD is required as a cofactor. The cofactor is Mo-molybdopterin. In terms of tissue distribution, transcripts expressed at high levels in developing siliques and at low levels in dry seeds.

It is found in the cytoplasm. The catalysed reaction is indole-3-acetaldehyde + O2 + H2O = (indol-3-yl)acetate + H2O2 + H(+). The enzyme catalyses an aldehyde + O2 + H2O = a carboxylate + H2O2 + H(+). It carries out the reaction benzaldehyde + O2 + H2O = benzoate + H2O2 + H(+). It catalyses the reaction hexanal + O2 + H2O = hexanoate + H2O2 + H(+). The catalysed reaction is 1-naphthaldehyde + O2 + H2O = 1-naphthoate + H2O2 + H(+). The enzyme catalyses vanillin + O2 + H2O = vanillate + H2O2 + H(+). It carries out the reaction malonaldehyde + O2 + H2O = 3-oxopropanoate + H2O2 + H(+). It catalyses the reaction citral + O2 + H2O = 3,7-dimethylocta-2,6-dienoate + H2O2 + H(+). The catalysed reaction is acrolein + O2 + H2O = acrylate + H2O2 + H(+). The enzyme catalyses (E)-4-hydroxynon-2-enal + O2 + H2O = (E)-4-hydroxynon-2-enoate + H2O2 + H(+). It carries out the reaction (E)-cinnamaldehyde + O2 + H2O = (E)-cinnamate + H2O2 + H(+). It catalyses the reaction indole-3-carbaldehyde + O2 + H2O = indole-3-carboxylate + H2O2 + H(+). The catalysed reaction is propanal + O2 + H2O = propanoate + H2O2 + H(+). The enzyme catalyses dodecanal + O2 + H2O = dodecanoate + H2O2 + H(+). It carries out the reaction salicylaldehyde + O2 + H2O = salicylate + H2O2 + H(+). With respect to regulation, inhibited by Cu(2+). Functionally, aldehyde oxidase with a broad substrate specificity. Involved in the accumulation of benzoic acid (BA) in siliques. Delays and protects siliques from senescence by catalyzing aldehyde detoxification in siliques. Catalyzes the oxidation of an array of aromatic and aliphatic aldehydes, including vanillin and the reactive carbonyl species (RCS) acrolein, 4-hydroxyl-2-nonenal (HNE), and malondialdehyde (MDA). The chain is Aldehyde oxidase 4 from Arabidopsis thaliana (Mouse-ear cress).